The sequence spans 108 residues: Translation initiation factor 1A (108 aa).

One can recognise an S1-like domain in the interval 10–84; it reads IRVITPNKKS…EKGDIIYRYT (75 aa).

This sequence belongs to the eIF-1A family.

Seems to be required for maximal rate of protein biosynthesis. Enhances ribosome dissociation into subunits and stabilizes the binding of the initiator Met-tRNA(I) to 40 S ribosomal subunits. The sequence is that of Translation initiation factor 1A from Picrophilus torridus (strain ATCC 700027 / DSM 9790 / JCM 10055 / NBRC 100828 / KAW 2/3).